Consider the following 450-residue polypeptide: UDP-N-acetylmuramoylalanine--D-glutamate ligase (450 aa).

Residue 112-118 (GSNGKTT) participates in ATP binding.

It belongs to the MurCDEF family.

The protein resides in the cytoplasm. It carries out the reaction UDP-N-acetyl-alpha-D-muramoyl-L-alanine + D-glutamate + ATP = UDP-N-acetyl-alpha-D-muramoyl-L-alanyl-D-glutamate + ADP + phosphate + H(+). Its pathway is cell wall biogenesis; peptidoglycan biosynthesis. Cell wall formation. Catalyzes the addition of glutamate to the nucleotide precursor UDP-N-acetylmuramoyl-L-alanine (UMA). The sequence is that of UDP-N-acetylmuramoylalanine--D-glutamate ligase from Cytophaga hutchinsonii (strain ATCC 33406 / DSM 1761 / CIP 103989 / NBRC 15051 / NCIMB 9469 / D465).